A 340-amino-acid polypeptide reads, in one-letter code: Probable protein phosphatase 2C 21 (340 aa).

The tract at residues 1–21 (MGASPSRPLEQSPSSSEGENH) is disordered. Residues 24-305 (KYASYTTQGF…DNATAILVKF (282 aa)) enclose the PPM-type phosphatase domain. Mn(2+) contacts are provided by D58, G59, D254, and D296. The tract at residues 311–340 (DPDEVASARDEHQHNPEGGDEKLDINNDND) is disordered. Over residues 316-340 (ASARDEHQHNPEGGDEKLDINNDND) the composition is skewed to basic and acidic residues.

This sequence belongs to the PP2C family. Mg(2+) is required as a cofactor. The cofactor is Mn(2+).

It catalyses the reaction O-phospho-L-seryl-[protein] + H2O = L-seryl-[protein] + phosphate. It carries out the reaction O-phospho-L-threonyl-[protein] + H2O = L-threonyl-[protein] + phosphate. In Oryza sativa subsp. japonica (Rice), this protein is Probable protein phosphatase 2C 21.